The primary structure comprises 305 residues: Mitochondrial thiamine pyrophosphate carrier 1 (305 aa).

Helical transmembrane passes span 16–32, 84–100, 122–142, 169–193, 213–229, and 270–287; these read VSPYESLLAGSISGAVA, ILYVLYGAAQFTTYSSI, LVSGTGAGVVSTLVTYPFDLL, GFTGLFAGIKPAMLSISTTTGLMFW, ICGFIAGATSKGITFPL, and GFGISVLKTSPTSAVSLF. Solcar repeat units follow at residues 16-103, 116-201, and 206-295; these read VSPY…ISRW, PSSA…VRET, and DIPF…SLAA.

The protein belongs to the mitochondrial carrier (TC 2.A.29) family.

It localises to the mitochondrion inner membrane. Mitochondrial transporter that mediates uptake of thiamine pyrophosphate (ThPP) into mitochondria. This is Mitochondrial thiamine pyrophosphate carrier 1 (TPC1) from Scheffersomyces stipitis (strain ATCC 58785 / CBS 6054 / NBRC 10063 / NRRL Y-11545) (Yeast).